The primary structure comprises 171 residues: Co-chaperone protein HscB homolog (171 aa).

One can recognise a J domain in the interval 2 to 74; it reads NHFELFGLPP…ISRAEYLLSQ (73 aa).

It belongs to the HscB family. In terms of assembly, interacts with HscA and stimulates its ATPase activity.

Functionally, co-chaperone involved in the maturation of iron-sulfur cluster-containing proteins. Seems to help targeting proteins to be folded toward HscA. This Vibrio vulnificus (strain YJ016) protein is Co-chaperone protein HscB homolog.